The chain runs to 376 residues: GTPase Obg (376 aa).

The region spanning 2-161 is the Obg domain; the sequence is ASFVDEVLIR…RVVHVELRIV (160 aa). The region spanning 162-328 is the OBG-type G domain; that stretch reads ADVGFVGLPN…LQEAFVRLSD (167 aa). Residues 168–175, 193–197, 215–218, 282–285, and 309–311 contribute to the GTP site; these read GLPNAGKS, FTTRI, DVPG, TKLD, and SVH. The Mg(2+) site is built by S175 and T195.

It belongs to the TRAFAC class OBG-HflX-like GTPase superfamily. OBG GTPase family. As to quaternary structure, monomer. Mg(2+) is required as a cofactor.

Its subcellular location is the cytoplasm. Functionally, an essential GTPase which binds GTP, GDP and possibly (p)ppGpp with moderate affinity, with high nucleotide exchange rates and a fairly low GTP hydrolysis rate. Plays a role in control of the cell cycle, stress response, ribosome biogenesis and in those bacteria that undergo differentiation, in morphogenesis control. The protein is GTPase Obg of Treponema pallidum (strain Nichols).